Here is a 282-residue protein sequence, read N- to C-terminus: Hydroxyacylglutathione hydrolase-like protein (282 aa).

Zn(2+)-binding residues include histidine 54, histidine 56, aspartate 58, histidine 59, histidine 110, aspartate 134, and histidine 173.

It belongs to the metallo-beta-lactamase superfamily. Glyoxalase II family. Requires Zn(2+) as cofactor.

Functionally, hydrolase acting on ester bonds. This is Hydroxyacylglutathione hydrolase-like protein (HAGHL) from Gallus gallus (Chicken).